Consider the following 111-residue polypeptide: Macrodomain Ori protein (111 aa).

This sequence belongs to the MaoP family.

Its function is as follows. Involved in the organization of the Ori region of the chromosome into a macrodomain (MD). It constrains DNA mobility in the Ori macrodomain and limits long-distance DNA interactions with other chromosomal regions. The sequence is that of Macrodomain Ori protein from Haemophilus influenzae (strain ATCC 51907 / DSM 11121 / KW20 / Rd).